The sequence spans 1305 residues: Contactin-associated protein like 5-4 (1305 aa).

Positions 1–24 (MNSVRRLNSILTLVLSGLWHLGLT) are cleaved as a signal peptide. Residues 25–1237 (ATNYNCDEPL…LTDTVQSDSA (1213 aa)) lie on the Extracellular side of the membrane. The F5/8 type C domain occupies 30–174 (CDEPLASFLS…IGMRVEVYGC (145 aa)). A disulfide bridge links Cys30 with Cys174. 2 Laminin G-like domains span residues 180–360 (IVGF…TFSC) and 367–544 (PITF…IDLC). Residue Asn282 is glycosylated (N-linked (GlcNAc...) asparagine). Cys329 and Cys360 are disulfide-bonded. Asn496 is a glycosylation site (N-linked (GlcNAc...) asparagine). 3 disulfide bridges follow: Cys512–Cys544, Cys550–Cys561, and Cys555–Cys570. Residues 546–583 (IKDRCLPNYCEHGGHCAQNWTTFYCNCSDTGYTGATCH) enclose the EGF-like 1 domain. Asn571 carries an N-linked (GlcNAc...) asparagine glycan. Residues Cys572 and Cys582 are joined by a disulfide bond. One can recognise a Fibrinogen C-terminal domain in the interval 584–790 (DSVYEQSCEV…LRCYGDRHFW (207 aa)). An N-linked (GlcNAc...) asparagine glycan is attached at Asn622. A Laminin G-like 3 domain is found at 791 to 956 (NAVSFTTEAS…KLMSGVTPGC (166 aa)). Disulfide bonds link Cys929–Cys956, Cys960–Cys973, Cys967–Cys982, and Cys984–Cys994. In terms of domain architecture, EGF-like 2 spans 957–995 (LGHCSSYGSNCLNGGKCVEKQSGYSCDCTNSPNEGPFCQ). Positions 1014–1198 (EPYLVIKNTS…VQGTLTESGC (185 aa)) constitute a Laminin G-like 4 domain. N-linked (GlcNAc...) asparagine glycosylation occurs at Asn1057. A disulfide bond links Cys1163 and Cys1198. A helical membrane pass occupies residues 1238–1258 (VIGGIIALVTFVTFCVIGIMI). Over 1259 to 1305 (HFLYLHKQSHCTNQTKEKEYSENLSNSFRNAIDLQNTASECKREYFI) the chain is Cytoplasmic.

It belongs to the neurexin family.

The protein resides in the membrane. Functionally, may play a role in the correct development and proper functioning of the peripheral and central nervous system and be involved in cell adhesion and intercellular communication. This chain is Contactin-associated protein like 5-4 (Cntnap5d), found in Rattus norvegicus (Rat).